We begin with the raw amino-acid sequence, 120 residues long: Glycine cleavage system H protein (120 aa).

Residues 17-99 (VATVGITAHA…MGAGWFFKLK (83 aa)) enclose the Lipoyl-binding domain. Residue Lys58 is modified to N6-lipoyllysine.

Belongs to the GcvH family. In terms of assembly, the glycine cleavage system is composed of four proteins: P, T, L and H. (R)-lipoate serves as cofactor.

The glycine cleavage system catalyzes the degradation of glycine. The H protein shuttles the methylamine group of glycine from the P protein to the T protein. This Rhizobium rhizogenes (strain K84 / ATCC BAA-868) (Agrobacterium radiobacter) protein is Glycine cleavage system H protein.